Consider the following 446-residue polypeptide: Phosphoglucosamine mutase (446 aa).

Ser104 acts as the Phosphoserine intermediate in catalysis. Mg(2+)-binding residues include Ser104, Asp241, Asp243, and Asp245. Ser104 is subject to Phosphoserine.

The protein belongs to the phosphohexose mutase family. It depends on Mg(2+) as a cofactor. Post-translationally, activated by phosphorylation.

It catalyses the reaction alpha-D-glucosamine 1-phosphate = D-glucosamine 6-phosphate. Catalyzes the conversion of glucosamine-6-phosphate to glucosamine-1-phosphate. The protein is Phosphoglucosamine mutase of Teredinibacter turnerae (strain ATCC 39867 / T7901).